We begin with the raw amino-acid sequence, 183 residues long: Large ribosomal subunit protein uL5 (183 aa).

Belongs to the universal ribosomal protein uL5 family. In terms of assembly, part of the 50S ribosomal subunit; part of the 5S rRNA/L5/L18/L25 subcomplex. Contacts the 5S rRNA and the P site tRNA. Forms a bridge to the 30S subunit in the 70S ribosome.

This is one of the proteins that bind and probably mediate the attachment of the 5S RNA into the large ribosomal subunit, where it forms part of the central protuberance. In the 70S ribosome it contacts protein S13 of the 30S subunit (bridge B1b), connecting the 2 subunits; this bridge is implicated in subunit movement. Contacts the P site tRNA; the 5S rRNA and some of its associated proteins might help stabilize positioning of ribosome-bound tRNAs. In Christiangramia forsetii (strain DSM 17595 / CGMCC 1.15422 / KT0803) (Gramella forsetii), this protein is Large ribosomal subunit protein uL5.